Here is a 156-residue protein sequence, read N- to C-terminus: Small ribosomal subunit protein uS7 (156 aa).

Belongs to the universal ribosomal protein uS7 family. Part of the 30S ribosomal subunit. Contacts proteins S9 and S11.

One of the primary rRNA binding proteins, it binds directly to 16S rRNA where it nucleates assembly of the head domain of the 30S subunit. Is located at the subunit interface close to the decoding center, probably blocks exit of the E-site tRNA. In Sodalis glossinidius (strain morsitans), this protein is Small ribosomal subunit protein uS7.